We begin with the raw amino-acid sequence, 269 residues long: NAD kinase (269 aa).

The active-site Proton acceptor is Asp-62. NAD(+) is bound by residues 62-63, 130-131, Lys-141, Arg-158, Asp-160, 171-176, Ala-195, and Gln-229; these read DG, NE, and TAYAMS.

It belongs to the NAD kinase family. The cofactor is a divalent metal cation.

The protein localises to the cytoplasm. The enzyme catalyses NAD(+) + ATP = ADP + NADP(+) + H(+). Functionally, involved in the regulation of the intracellular balance of NAD and NADP, and is a key enzyme in the biosynthesis of NADP. Catalyzes specifically the phosphorylation on 2'-hydroxyl of the adenosine moiety of NAD to yield NADP. This Methanospirillum hungatei JF-1 (strain ATCC 27890 / DSM 864 / NBRC 100397 / JF-1) protein is NAD kinase.